Consider the following 104-residue polypeptide: uncharacterized protein (104 aa).

This is an uncharacterized protein from Schizosaccharomyces pombe (strain 972 / ATCC 24843) (Fission yeast).